Here is a 479-residue protein sequence, read N- to C-terminus: Chromosomal replication initiator protein DnaA (479 aa).

The interval 1-94 is domain I, interacts with DnaA modulators; that stretch reads MKGGTMVENA…QTLWRTERED (94 aa). A domain II region spans residues 94–142; sequence DIKGVELQVKRGLPEVSMGDAEDGEDGSGEGHELATQAAAPESRSDLAV. The tract at residues 106-137 is disordered; it reads LPEVSMGDAEDGEDGSGEGHELATQAAAPESR. Residues 143–359 form a domain III, AAA+ region region; sequence PLDPRFTFDT…GALNRLIAHA (217 aa). Positions 188, 190, 191, and 192 each coordinate ATP. Residues 360 to 479 are domain IV, binds dsDNA; the sequence is DLVGRPVTLD…VELLRRMLEG (120 aa).

The protein belongs to the DnaA family. As to quaternary structure, oligomerizes as a right-handed, spiral filament on DNA at oriC.

It is found in the cytoplasm. Its function is as follows. Plays an essential role in the initiation and regulation of chromosomal replication. ATP-DnaA binds to the origin of replication (oriC) to initiate formation of the DNA replication initiation complex once per cell cycle. Binds the DnaA box (a 9 base pair repeat at the origin) and separates the double-stranded (ds)DNA. Forms a right-handed helical filament on oriC DNA; dsDNA binds to the exterior of the filament while single-stranded (ss)DNA is stabiized in the filament's interior. The ATP-DnaA-oriC complex binds and stabilizes one strand of the AT-rich DNA unwinding element (DUE), permitting loading of DNA polymerase. After initiation quickly degrades to an ADP-DnaA complex that is not apt for DNA replication. Binds acidic phospholipids. The protein is Chromosomal replication initiator protein DnaA of Gluconobacter oxydans (strain 621H) (Gluconobacter suboxydans).